The sequence spans 1461 residues: MGAVGIPLTAHCVVLFLLQMVALSSEQFTVNGLESPVLVPLDGNLELSCQLSPPQQAKHMEIRWFKNRYSEPVYLYRNGKDLFGEIVYKYVERTELLKDDIGKGKVTLRIFKVTSVDSGSYHCFFKDGKFYEEHIIDVKVTATSSDIQILMHPPNIKGVRLECHSGGWFPQPHMEWRDSKGEYIPATSKSHSQDENEFFNMTMDLFIKSNSHWSATCYIQNFVTHQEESISIVLPGVWDSWCPAWIMITLLIVIHMTYYIKLYRTYATKEMLLKSIQSSSQSSTVDTEKKEWLLKSIQSRIQSSSVDAEKKEWLLKFIQSSIQSSSVDLEKKEWLLKSIQSSIQSAIVDRGTKEWLLESIQSSILSSIVDQGTKVLLLKSIQSSIQSSTLDIETKELLLKSIQSSIQSSIMDLGTKELLLKIIQSSIQSSSVDLGTKELLLKIIQSSIQSSTVDLGTKELLLKIIQSSIQSSSVDLGTKELLLKIIQSSIQSSTVDLGTKELLLKIIQSSIQSSSVDLGAKMGLLESILSSIQSSNVDLETKVLLLKSIQSSIQSSTVYLGIKQWLLERIESIIQSSSVYLDTKELLLKIIQSSIESYSVDLGNKEFLLKIILSSIQSSSVDLGTKELLVKFFQSNIQSSSVIPGTKKLLVKIIQSSLQSSSVDLGTKKVLLDIIQTSIQNSNVHTERKGLLLKIIQSSVQSSSVDQGTKEMLLEIIQSSIQNSSVNQWTKDLLLKIIQSIIQSSSVDLGTKGFLLKIIQSSIQSSSVDIGTKSMLLKKTGLILKSSIVNPGTELLFQLIESIRHSSSVNSETKKMLSEITQSTVQSSSVNPVTEEMIEEKYQLLLQSSSVNLEAENILNVTTQWILQISSVNQGKEMLLLDKIQQILQISSVNPETKDLLLEKIELILQNPGVHQETKDLLLERIQLILQNSSVQKETKYLLLERIRSILQSSCVQKETKDLLLERIQSLLQSSCVQKETKDLLLEKIQLILQNSTVHQETKDLLLERIQLFLQNSTVDQETSYLLLKRIQLILQSSSVKKETKEFVLYIIESILHSSSVHQETKDLLFDRVQLILESSSVQQGLKCLLLNMIQVIFQRTSVQKEMKDLLFNRIPLILESSSVQQETKDKLLDIIQSILQRTSVQEETKDKLLDIIQSILQRSSVQKDTIDTLLDRIQLILQRTSVQKEMKDFLLDRIKSILESFSVHQETKKLLLNRIMSILESSTVHQETKKLLLERIQSILESSSVQQETKKLLLDRIHSILKSSSVQKETKNLLLDRIHSILKSSSVQKESCNKRNPFWKKYALDLGISVFTIIVVTLIMHLKQREADQHFELNTLWSKDTSVILCVLIMFNNRLKALIYFRLYGFSPPGKAHKYIVNYILRFSHPVFCIVYSATILYMYLQIQNKDSLFSLYNSWMVEMEMVLIFLLVIFNVKNIATVLLYFDSTTLRLFFWIKG.

A signal peptide spans 1–24; sequence MGAVGIPLTAHCVVLFLLQMVALS. Topologically, residues 25-1306 are extracellular; the sequence is SEQFTVNGLE…CNKRNPFWKK (1282 aa). An Ig-like V-type domain is found at 26–139; the sequence is EQFTVNGLES…FYEEHIIDVK (114 aa). Disulfide bonds link cysteine 49/cysteine 123 and cysteine 163/cysteine 217. The region spanning 142 to 231 is the Ig-like C1-type domain; the sequence is ATSSDIQILM…FVTHQEESIS (90 aa). N-linked (GlcNAc...) asparagine glycosylation is present at asparagine 200. A helical transmembrane segment spans residues 1307–1327; it reads YALDLGISVFTIIVVTLIMHL. The Cytoplasmic portion of the chain corresponds to 1328–1345; the sequence is KQREADQHFELNTLWSKD. A helical transmembrane segment spans residues 1346 to 1366; the sequence is TSVILCVLIMFNNRLKALIYF. The Extracellular segment spans residues 1367 to 1387; the sequence is RLYGFSPPGKAHKYIVNYILR. Residues 1388–1408 traverse the membrane as a helical segment; it reads FSHPVFCIVYSATILYMYLQI. Residues 1409–1427 lie on the Cytoplasmic side of the membrane; sequence QNKDSLFSLYNSWMVEMEM. The helical transmembrane segment at 1428-1448 threads the bilayer; sequence VLIFLLVIFNVKNIATVLLYF. Over 1449–1461 the chain is Extracellular; that stretch reads DSTTLRLFFWIKG.

Belongs to the SKINT family. As to expression, expressed in skin and, to a lower extent, testis.

It is found in the membrane. Its function is as follows. May act by engaging a cell surface molecule on immature T-cells in the embryonic thymus. This is Selection and upkeep of intraepithelial T-cells protein 5 (Skint5) from Mus musculus (Mouse).